The chain runs to 1220 residues: DNA-directed RNA polymerase subunit beta' (1220 aa).

The Zn(2+) site is built by C60, C62, C75, and C78. Positions 449, 451, and 453 each coordinate Mg(2+). Residues C818, C892, C899, and C902 each coordinate Zn(2+).

It belongs to the RNA polymerase beta' chain family. In terms of assembly, the RNAP catalytic core consists of 2 alpha, 1 beta, 1 beta' and 1 omega subunit. When a sigma factor is associated with the core the holoenzyme is formed, which can initiate transcription. The cofactor is Mg(2+). Requires Zn(2+) as cofactor.

The catalysed reaction is RNA(n) + a ribonucleoside 5'-triphosphate = RNA(n+1) + diphosphate. DNA-dependent RNA polymerase catalyzes the transcription of DNA into RNA using the four ribonucleoside triphosphates as substrates. This is DNA-directed RNA polymerase subunit beta' from Lacticaseibacillus casei (strain BL23) (Lactobacillus casei).